We begin with the raw amino-acid sequence, 557 residues long: Ubiquitin C-terminal hydrolase 22 (557 aa).

A UBP-type; degenerate zinc finger spans residues 36–130 (FRCFNDARIK…VSKQLFGLGM (95 aa)). Zn(2+) contacts are provided by C56, C59, C69, C72, C77, H80, H84, and H91. The USP domain occupies 177-531 (RGLNNLGSTC…ECYMLFYAQE (355 aa)). The active-site Nucleophile is the C186. Residue H491 is the Proton acceptor of the active site.

This sequence belongs to the peptidase C19 family. As to quaternary structure, component of a deubiquitination module (DUB module) formed by ENY2, SGF11, and UBP22 in Arabidopsis. Interacts directly with SGF11, but not with ENY2.

It localises to the nucleus. The protein localises to the nucleoplasm. The catalysed reaction is Thiol-dependent hydrolysis of ester, thioester, amide, peptide and isopeptide bonds formed by the C-terminal Gly of ubiquitin (a 76-residue protein attached to proteins as an intracellular targeting signal).. Functionally, component of a deubiquitination module (DUB module) that specifically deubiquinates monoubiquinated histone H2B (H2Bub). Does not seem to be a component of the TREX-2 complex. Seems to act independently of the SAGA multiprotein complex. The DUB module is responsible for the major H2Bub deubiquitinase activity in Arabidopsis. The chain is Ubiquitin C-terminal hydrolase 22 from Arabidopsis thaliana (Mouse-ear cress).